A 284-amino-acid chain; its full sequence is WUSCHEL-related homeobox 10 (284 aa).

The disordered stretch occupies residues 1-43 (MDRTATASWEVMSRRGEQQQQLMMQAPASHNGGSGGGEPARSR). The homeobox; WUS-type DNA-binding region spans 39–103 (PARSRWAPKP…NRRSRSRRRA (65 aa)).

Belongs to the WUS homeobox family.

Its subcellular location is the nucleus. Transcription factor which may be involved in developmental processes. The chain is WUSCHEL-related homeobox 10 (WOX10) from Oryza sativa subsp. japonica (Rice).